Reading from the N-terminus, the 623-residue chain is Arginine decarboxylase 2 (623 aa).

Residue K109 is modified to N6-(pyridoxal phosphate)lysine. 295 to 305 is a substrate binding site; the sequence is LDCGGGLGVDY.

This sequence belongs to the Orn/Lys/Arg decarboxylase class-II family. SpeA subfamily. The cofactor is pyridoxal 5'-phosphate. It depends on Mg(2+) as a cofactor. As to expression, expressed in stems (at protein level).

It catalyses the reaction L-arginine + H(+) = agmatine + CO2. It participates in amine and polyamine biosynthesis; agmatine biosynthesis; agmatine from L-arginine: step 1/1. This chain is Arginine decarboxylase 2 (ADC2), found in Oryza sativa subsp. japonica (Rice).